A 263-amino-acid polypeptide reads, in one-letter code: 4-hydroxy-tetrahydrodipicolinate reductase (263 aa).

Residues Gly7–Met12 and Asp33 each bind NAD(+). Arg34 provides a ligand contact to NADP(+). Residues Gly96–Thr98 and Ala120–Met123 contribute to the NAD(+) site. His153 (proton donor/acceptor) is an active-site residue. A (S)-2,3,4,5-tetrahydrodipicolinate-binding site is contributed by His154. Catalysis depends on Lys157, which acts as the Proton donor. Residue Gly163–Thr164 coordinates (S)-2,3,4,5-tetrahydrodipicolinate.

It belongs to the DapB family.

The protein resides in the cytoplasm. It catalyses the reaction (S)-2,3,4,5-tetrahydrodipicolinate + NAD(+) + H2O = (2S,4S)-4-hydroxy-2,3,4,5-tetrahydrodipicolinate + NADH + H(+). The enzyme catalyses (S)-2,3,4,5-tetrahydrodipicolinate + NADP(+) + H2O = (2S,4S)-4-hydroxy-2,3,4,5-tetrahydrodipicolinate + NADPH + H(+). Its pathway is amino-acid biosynthesis; L-lysine biosynthesis via DAP pathway; (S)-tetrahydrodipicolinate from L-aspartate: step 4/4. Functionally, catalyzes the conversion of 4-hydroxy-tetrahydrodipicolinate (HTPA) to tetrahydrodipicolinate. The chain is 4-hydroxy-tetrahydrodipicolinate reductase from Ralstonia pickettii (strain 12J).